Reading from the N-terminus, the 418-residue chain is Tyrosine--tRNA ligase (418 aa).

Position 34 (Tyr-34) interacts with L-tyrosine. A 'HIGH' region motif is present at residues 39-48 (PTADSLHLGH). L-tyrosine-binding residues include Tyr-169 and Gln-173. The short motif at 229 to 233 (KFGKS) is the 'KMSKS' region element. Lys-232 contributes to the ATP binding site. Residues 352-418 (NNIVELLVSS…GKKKYFVLTY (67 aa)) enclose the S4 RNA-binding domain.

The protein belongs to the class-I aminoacyl-tRNA synthetase family. TyrS type 1 subfamily. In terms of assembly, homodimer.

The protein resides in the cytoplasm. The catalysed reaction is tRNA(Tyr) + L-tyrosine + ATP = L-tyrosyl-tRNA(Tyr) + AMP + diphosphate + H(+). Functionally, catalyzes the attachment of tyrosine to tRNA(Tyr) in a two-step reaction: tyrosine is first activated by ATP to form Tyr-AMP and then transferred to the acceptor end of tRNA(Tyr). The sequence is that of Tyrosine--tRNA ligase from Streptococcus pneumoniae (strain Taiwan19F-14).